Here is a 512-residue protein sequence, read N- to C-terminus: 2,3-bisphosphoglycerate-independent phosphoglycerate mutase (512 aa).

The Mn(2+) site is built by aspartate 11 and serine 61. Residue serine 61 is the Phosphoserine intermediate of the active site. Substrate-binding positions include histidine 122, 152–153 (RD), arginine 184, arginine 190, 259–262 (RADR), and lysine 332. Mn(2+) is bound by residues aspartate 399, histidine 403, aspartate 440, histidine 441, and histidine 459.

This sequence belongs to the BPG-independent phosphoglycerate mutase family. In terms of assembly, monomer. Mn(2+) is required as a cofactor.

The enzyme catalyses (2R)-2-phosphoglycerate = (2R)-3-phosphoglycerate. The protein operates within carbohydrate degradation; glycolysis; pyruvate from D-glyceraldehyde 3-phosphate: step 3/5. Its function is as follows. Catalyzes the interconversion of 2-phosphoglycerate and 3-phosphoglycerate. The chain is 2,3-bisphosphoglycerate-independent phosphoglycerate mutase from Francisella tularensis subsp. tularensis (strain FSC 198).